The sequence spans 312 residues: Ribosomal RNA small subunit methyltransferase H (312 aa).

Residues 35–37, Asp-55, Phe-79, Asp-100, and Gln-107 each bind S-adenosyl-L-methionine; that span reads GGH. Residues 279–312 form a disordered region; the sequence is LVGKSQRPGPGEVAANPRSRSAVMRVAERTGGAA.

The protein belongs to the methyltransferase superfamily. RsmH family.

It is found in the cytoplasm. The enzyme catalyses cytidine(1402) in 16S rRNA + S-adenosyl-L-methionine = N(4)-methylcytidine(1402) in 16S rRNA + S-adenosyl-L-homocysteine + H(+). In terms of biological role, specifically methylates the N4 position of cytidine in position 1402 (C1402) of 16S rRNA. This chain is Ribosomal RNA small subunit methyltransferase H, found in Aromatoleum aromaticum (strain DSM 19018 / LMG 30748 / EbN1) (Azoarcus sp. (strain EbN1)).